The sequence spans 550 residues: Membrane protein insertase YidC (550 aa).

The chain crosses the membrane as a helical span at residues 6 to 26 (LIVFIVLSFGLLFVWQEYFAP). A disordered region spans residues 30-59 (PKPVAAAVQPDGTPAPATARPADSPATGKL). The next 4 membrane-spanning stretches (helical) occupy residues 360 to 380 (WGWA…PLSA), 430 to 450 (LPIV…LASV), 472 to 492 (ILPA…PPPA), and 504 to 524 (PLAF…YWLV).

The protein belongs to the OXA1/ALB3/YidC family. Type 1 subfamily. In terms of assembly, interacts with the Sec translocase complex via SecD. Specifically interacts with transmembrane segments of nascent integral membrane proteins during membrane integration.

Its subcellular location is the cell inner membrane. Its function is as follows. Required for the insertion and/or proper folding and/or complex formation of integral membrane proteins into the membrane. Involved in integration of membrane proteins that insert both dependently and independently of the Sec translocase complex, as well as at least some lipoproteins. Aids folding of multispanning membrane proteins. This chain is Membrane protein insertase YidC, found in Laribacter hongkongensis (strain HLHK9).